A 294-amino-acid polypeptide reads, in one-letter code: Cytidine deaminase (294 aa).

CMP/dCMP-type deaminase domains lie at 48 to 168 (DEDA…FGPK) and 186 to 294 (LTGD…VLLG). 89 to 91 (NME) provides a ligand contact to substrate. Histidine 102 contacts Zn(2+). The active-site Proton donor is the glutamate 104. Zn(2+) contacts are provided by cysteine 129 and cysteine 132.

Belongs to the cytidine and deoxycytidylate deaminase family. In terms of assembly, homodimer. Zn(2+) serves as cofactor.

The enzyme catalyses cytidine + H2O + H(+) = uridine + NH4(+). It carries out the reaction 2'-deoxycytidine + H2O + H(+) = 2'-deoxyuridine + NH4(+). Functionally, this enzyme scavenges exogenous and endogenous cytidine and 2'-deoxycytidine for UMP synthesis. The polypeptide is Cytidine deaminase (Salmonella schwarzengrund (strain CVM19633)).